A 343-amino-acid chain; its full sequence is Dihydroorotate dehydrogenase (quinone) (343 aa).

FMN contacts are provided by residues 58-62 (AGYDK) and Ser82. Lys62 contributes to the substrate binding site. 107–111 (NRMGF) is a substrate binding site. Asn136 and Asn167 together coordinate FMN. Asn167 is a binding site for substrate. Ser170 serves as the catalytic Nucleophile. Asn172 provides a ligand contact to substrate. FMN contacts are provided by Lys206 and Ser234. 235–236 (NT) is a binding site for substrate. FMN is bound by residues Gly256, Gly285, and 306–307 (YS).

The protein belongs to the dihydroorotate dehydrogenase family. Type 2 subfamily. Monomer. Requires FMN as cofactor.

The protein localises to the cell membrane. It catalyses the reaction (S)-dihydroorotate + a quinone = orotate + a quinol. The protein operates within pyrimidine metabolism; UMP biosynthesis via de novo pathway; orotate from (S)-dihydroorotate (quinone route): step 1/1. In terms of biological role, catalyzes the conversion of dihydroorotate to orotate with quinone as electron acceptor. This chain is Dihydroorotate dehydrogenase (quinone), found in Erythrobacter litoralis (strain HTCC2594).